We begin with the raw amino-acid sequence, 431 residues long: Adenylosuccinate synthetase (431 aa).

GTP contacts are provided by residues G12–K18 and G40–T42. The active-site Proton acceptor is D13. The Mg(2+) site is built by D13 and G40. IMP-binding positions include D13–K16, N38–H41, T130, R144, Q225, T240, and R304. H41 serves as the catalytic Proton donor. A300 to R306 lines the substrate pocket. GTP contacts are provided by residues R306, K332–D334, and S414–G416.

This sequence belongs to the adenylosuccinate synthetase family. Homodimer. Mg(2+) serves as cofactor.

Its subcellular location is the cytoplasm. It carries out the reaction IMP + L-aspartate + GTP = N(6)-(1,2-dicarboxyethyl)-AMP + GDP + phosphate + 2 H(+). It participates in purine metabolism; AMP biosynthesis via de novo pathway; AMP from IMP: step 1/2. In terms of biological role, plays an important role in the de novo pathway of purine nucleotide biosynthesis. Catalyzes the first committed step in the biosynthesis of AMP from IMP. The sequence is that of Adenylosuccinate synthetase from Anaeromyxobacter sp. (strain Fw109-5).